A 408-amino-acid chain; its full sequence is Succinylornithine transaminase (408 aa).

N6-(pyridoxal phosphate)lysine is present on Lys252.

It belongs to the class-III pyridoxal-phosphate-dependent aminotransferase family. AstC subfamily. Pyridoxal 5'-phosphate is required as a cofactor.

It carries out the reaction N(2)-succinyl-L-ornithine + 2-oxoglutarate = N-succinyl-L-glutamate 5-semialdehyde + L-glutamate. Its pathway is amino-acid degradation; L-arginine degradation via AST pathway; L-glutamate and succinate from L-arginine: step 3/5. Its function is as follows. Catalyzes the transamination of N(2)-succinylornithine and alpha-ketoglutarate into N(2)-succinylglutamate semialdehyde and glutamate. Can also act as an acetylornithine aminotransferase. The protein is Succinylornithine transaminase of Salmonella typhi.